The chain runs to 226 residues: Cytidylate kinase (226 aa).

9-17 provides a ligand contact to ATP; sequence GPAGAGKST.

This sequence belongs to the cytidylate kinase family. Type 1 subfamily.

It is found in the cytoplasm. It catalyses the reaction CMP + ATP = CDP + ADP. The catalysed reaction is dCMP + ATP = dCDP + ADP. The protein is Cytidylate kinase of Clostridium tetani (strain Massachusetts / E88).